The primary structure comprises 517 residues: Probable G-protein coupled receptor Mth-like 4 (517 aa).

An N-terminal signal peptide occupies residues 1–18 (MRILLIAVLFLLMPKSNA). At 19–212 (EIPGCDFFDT…LSSEHSRTWK (194 aa)) the chain is on the extracellular side. 5 cysteine pairs are disulfide-bonded: cysteine 23–cysteine 77, cysteine 79–cysteine 84, cysteine 88–cysteine 183, cysteine 89–cysteine 100, and cysteine 145–cysteine 201. A glycan (N-linked (GlcNAc...) asparagine) is linked at asparagine 39. N-linked (GlcNAc...) asparagine glycans are attached at residues asparagine 117 and asparagine 165. The helical transmembrane segment at 213–233 (TVAIVISLICIILTISVYLYV) threads the bilayer. The Cytoplasmic segment spans residues 234 to 242 (EKLRNLHGK). The helical transmembrane segment at 243–263 (CFICYLASLFLGYFFLVLNVW) threads the bilayer. Residues 264 to 272 (KYSSGFCVT) are Extracellular-facing. The helical transmembrane segment at 273–293 (AGFLGYFSVMAAFFWLSVIGI) threads the bilayer. Over 294-319 (HLRIKFSLASNCLHRLLPENPFRAYN) the chain is Cytoplasmic. A helical transmembrane segment spans residues 320–340 (LYAWGIPLIMTAITYTADQVV). The Extracellular portion of the chain corresponds to 341–363 (KNEKLRPRVGVGKNCWIYTGDMT). A helical membrane pass occupies residues 364 to 384 (VMIYFYGPMLLLIAFNIIMFV). Residues 385–414 (LSAIYIYNIKKNVKGLVHKQQTNQQINDQQ) are Cytoplasmic-facing. Residues 415–435 (MFAIFLRLFILMGLSWSFEIL) form a helical membrane-spanning segment. Residues 436 to 459 (SFLLTKQQAWARALMVADYFNWSQ) are Extracellular-facing. N-linked (GlcNAc...) asparagine glycosylation is present at asparagine 456. The helical transmembrane segment at 460 to 480 (GTIIFVLFILKPSILKLIIAG) threads the bilayer. Residues 481 to 517 (GRQNLPGSHHNSRSKAARYNSTHTACEGSIADPNAYC) lie on the Cytoplasmic side of the membrane.

The protein belongs to the G-protein coupled receptor 2 family. Mth subfamily.

It localises to the cell membrane. This Drosophila melanogaster (Fruit fly) protein is Probable G-protein coupled receptor Mth-like 4 (mthl4).